Consider the following 460-residue polypeptide: Mogroside I-E synthase (460 aa).

His25 (proton acceptor) is an active-site residue. Asp114 functions as the Charge relay in the catalytic mechanism. 9 residues coordinate UDP-alpha-D-glucose: Ser286, Cys339, Gln341, Trp359, Asn360, Ser361, Glu364, Asp380, and Gln381.

This sequence belongs to the UDP-glycosyltransferase family. Highly expressed in young fruits 15 days after anthesis (15-DAA).

It catalyses the reaction mogrol + UDP-alpha-D-glucose = mogroside IE + UDP + H(+). It carries out the reaction mogroside I-A1 + UDP-alpha-D-glucose = mogroside IIE + UDP + H(+). The enzyme catalyses mogroside II-A1 + UDP-alpha-D-glucose = mogroside IIIX + UDP + H(+). The catalysed reaction is mogroside II-A + UDP-alpha-D-glucose = mogroside III + UDP + H(+). It catalyses the reaction mogroside III-A1 + UDP-alpha-D-glucose = siamenoside I + UDP + H(+). It participates in secondary metabolite biosynthesis; terpenoid biosynthesis. In terms of biological role, UDP-glycosyltransferase involved in the biosynthesis of cucurbitacin and mogroside tetracyclic triterpene natural products (e.g. siamenoside I and mogrosides IV, V and VI). Cucurbitacins have cytotoxic properties and exhibit deterrent taste as a defense barrier against herbivores. Mogrosides are nonsugar highly oxygenated compounds used as high-intensity zero-calorie sweeteners; they also possess pharmacological properties such as regulating immunity, lowering blood sugar and lipid levels, protecting the liver, and acting as antioxidants and antitumor agents. Catalyzes the C3 primary glucosylation of mogrol, mogroside I-A1, mogroside II-A1, mogroside II-A and mogroside III-A1. The sequence is that of Mogroside I-E synthase from Siraitia grosvenorii (Monk's fruit).